The primary structure comprises 98 residues: Citrate lyase acyl carrier protein (98 aa).

Serine 14 is subject to O-(phosphoribosyl dephospho-coenzyme A)serine.

The protein belongs to the CitD family. As to quaternary structure, oligomer with a subunit composition of (alpha,beta,gamma)6.

It is found in the cytoplasm. Covalent carrier of the coenzyme of citrate lyase. In Shigella boydii serotype 18 (strain CDC 3083-94 / BS512), this protein is Citrate lyase acyl carrier protein.